Consider the following 622-residue polypeptide: Dehydrogenase mpl7 (622 aa).

Residues Thr-23 to Ala-24, Glu-44 to Ala-45, and Asn-102 to Ser-105 each bind FAD. Residue His-554 is the Proton acceptor of the active site. Residues Ala-582 and Ile-593–Met-594 contribute to the FAD site.

Belongs to the GMC oxidoreductase family. Homodimer. Requires FAD as cofactor.

The protein operates within mycotoxin biosynthesis. Its function is as follows. Dehydrogenase; part of the gene cluster that mediates the biosynthesis of the mycotoxin citrinin, a hepato-nephrotoxic compound to humans due to inhibition of respiration complex III. The pathway begins with the synthesis of a keto-aldehyde intermediate by the citrinin PKS (pksCT) from successive condensations of 4 malonyl-CoA units, presumably with a simple acetyl-CoA starter unit. Release of the keto-aldehyde intermediate is consistent with the presence of the C-terminal reductive release domain. Mp11 collaborates with pksCT by catalyzing the hydrolysis of ACP-bound acyl intermediates to free the ACP from stalled intermediates. Mpl2 then catalyzes the oxidation of the C-12 methyl of the ketone intermediate to an alcohol intermediate which is further oxidized by the oxidoreductase mpl7 to produce a bisaldehyde intermediate. The fourth catalytic step is catalyzed by the mpl4 aldehyde dehydrogenase. The final transformation is the reduction of C-3 by mpl6 to provide the chemically stable citrinin nucleus. The chain is Dehydrogenase mpl7 from Monascus purpureus (Red mold).